The sequence spans 666 residues: Long-chain-fatty-acid--CoA ligase ACSBG2 (666 aa).

Residues 230–238 (TSGTTGIPK), 418–423 (ELYGLS), aspartate 496, and arginine 624 each bind ATP.

Belongs to the ATP-dependent AMP-binding enzyme family. Bubblegum subfamily. As to expression, testis-specific.

The protein resides in the cytoplasm. It is found in the membrane. It catalyses the reaction a long-chain fatty acid + ATP + CoA = a long-chain fatty acyl-CoA + AMP + diphosphate. The enzyme catalyses (5Z,8Z,11Z,14Z)-eicosatetraenoate + ATP + CoA = (5Z,8Z,11Z,14Z)-eicosatetraenoyl-CoA + AMP + diphosphate. The catalysed reaction is hexadecanoate + ATP + CoA = hexadecanoyl-CoA + AMP + diphosphate. It carries out the reaction (9Z)-octadecenoate + ATP + CoA = (9Z)-octadecenoyl-CoA + AMP + diphosphate. It catalyses the reaction (9Z,12Z)-octadecadienoate + ATP + CoA = (9Z,12Z)-octadecadienoyl-CoA + AMP + diphosphate. The enzyme catalyses tetracosanoate + ATP + CoA = tetracosanoyl-CoA + AMP + diphosphate. Catalyzes the conversion of fatty acids such as long chain and very long-chain fatty acids to their active form acyl-CoAs for both synthesis of cellular lipids, and degradation via beta-oxidation. Can activate diverse saturated, monosaturated and polyunsaturated fatty acids. Has increased ability to activate oleic and linoleic acid. May play a role in spermatogenesis. The protein is Long-chain-fatty-acid--CoA ligase ACSBG2 of Homo sapiens (Human).